The following is a 185-amino-acid chain: Ribosome-recycling factor (185 aa).

It belongs to the RRF family.

It is found in the cytoplasm. Its function is as follows. Responsible for the release of ribosomes from messenger RNA at the termination of protein biosynthesis. May increase the efficiency of translation by recycling ribosomes from one round of translation to another. This chain is Ribosome-recycling factor, found in Vibrio vulnificus (strain YJ016).